The following is a 726-amino-acid chain: WD repeat-containing and planar cell polarity effector protein fritz homolog (726 aa).

2 WD repeats span residues 305–343 (LRSK…TLLA) and 344–383 (QAEL…INIQ). The segment covering 642 to 660 (SSGSTPKHTIQQKIPNGPS) has biased composition (polar residues). Positions 642-717 (SSGSTPKHTI…RRQDTEDVGS (76 aa)) are disordered. Residues 672 to 685 (MEETEEEEEEEEEA) are compositionally biased toward acidic residues. Residues 701–712 (GELREDHRRQDT) are compositionally biased toward basic and acidic residues.

Belongs to the WD repeat fritz family. Component of the CPLANE (ciliogenesis and planar polarity effectors) complex, composed of INTU, FUZ and WDPCP. Interacts with CPLANE1.

Its subcellular location is the cell membrane. The protein localises to the cytoplasm. It is found in the cytoskeleton. It localises to the cilium axoneme. The protein resides in the cilium basal body. Probable effector of the planar cell polarity signaling pathway which regulates the septin cytoskeleton in both ciliogenesis and collective cell movements. Together with FUZ and WDPCP proposed to function as core component of the CPLANE (ciliogenesis and planar polarity effectors) complex involved in the recruitment of peripheral IFT-A proteins to basal bodies. Binds phosphatidylinositol 3-phosphate with highest affinity, followed by phosphatidylinositol 4-phosphate and phosphatidylinositol 5-phosphate. The polypeptide is WD repeat-containing and planar cell polarity effector protein fritz homolog (Wdpcp) (Rattus norvegicus (Rat)).